The following is a 442-amino-acid chain: MEAKTSGPKQIQPSTPAPPPSTRRPRVREVSSRFMSPVTSSSSSAGDLHSLTCNSPKQHHLQHHQIQRSVSAQRLRRQLKMADGDENRSSETAARSLDSPFTLSQSRKSSKPSHLKPLNENSHRLETPTPMVPPPPSRSRLSQQRLPTATRLLQLSGISACYEKEGIINIQEKPKSNGSDQFPTLSCRTHLKVFNNPVPSSLNRSVSSPSSSCNVRESSSFSRLGLPLPPMAPKVPADTKKQRKVTEQLEDVHSLKLLHNRYLQWRFANANAQVKTQTHKTQTETMIHSFGSKISELHDSVQRKRIELQRLLKTKALLAITESQTPCLEQWSAIEEEYSTSVSQTIQAFSNASLRLPLDGDIMVDSKQLGDGLVAASKIVDGITQNVGNYMPKAKEMESLLSELTRVARSERSLTENCVVALLKTQASQVLNLSLHKLKNVL.

Disordered stretches follow at residues 1-144 and 221-240; these read MEAK…LSQQ and FSRL…ADTK. Basic residues predominate over residues 57 to 66; that stretch reads KQHHLQHHQI. Residues 80-89 are compositionally biased toward basic and acidic residues; sequence KMADGDENRS. The QWRF motif motif lies at 264–267; that stretch reads QWRF.

It belongs to the QWRF family.

The polypeptide is QWRF motif-containing protein 6 (QWRF6) (Arabidopsis thaliana (Mouse-ear cress)).